A 422-amino-acid chain; its full sequence is PHAF1 protein T01G9.2 (422 aa).

This sequence belongs to the PHAF1 family.

The protein resides in the cytoplasm. It is found in the preautophagosomal structure. May play a regulatory role in autophagic activity. This Caenorhabditis elegans protein is PHAF1 protein T01G9.2.